Consider the following 214-residue polypeptide: Probable transaldolase (214 aa).

Residue Lys83 is the Schiff-base intermediate with substrate of the active site.

Belongs to the transaldolase family. Type 3B subfamily.

The protein localises to the cytoplasm. It carries out the reaction D-sedoheptulose 7-phosphate + D-glyceraldehyde 3-phosphate = D-erythrose 4-phosphate + beta-D-fructose 6-phosphate. It participates in carbohydrate degradation; pentose phosphate pathway; D-glyceraldehyde 3-phosphate and beta-D-fructose 6-phosphate from D-ribose 5-phosphate and D-xylulose 5-phosphate (non-oxidative stage): step 2/3. Transaldolase is important for the balance of metabolites in the pentose-phosphate pathway. This is Probable transaldolase from Geotalea uraniireducens (strain Rf4) (Geobacter uraniireducens).